A 329-amino-acid chain; its full sequence is MTATKQHKKVILVGDGAVGSSYAFALVNQGIAQELGIIEIPALFDKAVGDAEDLSHALAFTSPKKIYAATYADCADADLVVITAGAPQKPGETRLDLVGKNLAINKSIVTQVVESGFNGIFLVAANPVDVLTYSTWKFSGFPKERVIGSGTSLDSARFRQALADKIGVDARSVHAYIMGEHGDSEFAVWSHANVAGVQLEQWLQENRDIDEQGLVDLFISVRDAAYSIINKKGATYYGIAVALARITKAILDDENAVLPLSVYQEGQYGDVKDVFIGQPAIVGAHGIVRPVNIPLNDAELQKMQASAEQLKDIIDEAWKNPEFQEASKN.

NAD(+) is bound by residues V18, E39, K46, Y71, and 85-86; that span reads GA. Residues Q88 and R94 each coordinate substrate. NAD(+) is bound by residues S107, 124-126, and S149; that span reads AAN. 126 to 129 is a binding site for substrate; it reads NPVD. A substrate-binding site is contributed by 154 to 157; sequence DSAR. R159 and H174 together coordinate beta-D-fructose 1,6-bisphosphate. H181 (proton acceptor) is an active-site residue. Position 226 is a phosphotyrosine (Y226). A substrate-binding site is contributed by T235.

It belongs to the LDH/MDH superfamily. LDH family. In terms of assembly, homotetramer.

The protein localises to the cytoplasm. It catalyses the reaction (S)-lactate + NAD(+) = pyruvate + NADH + H(+). The protein operates within fermentation; pyruvate fermentation to lactate; (S)-lactate from pyruvate: step 1/1. Its activity is regulated as follows. Allosterically activated by fructose 1,6-bisphosphate (FBP). Catalyzes the conversion of lactate to pyruvate. This chain is L-lactate dehydrogenase, found in Streptococcus agalactiae serotype V (strain ATCC BAA-611 / 2603 V/R).